Consider the following 324-residue polypeptide: Rho crystallin (324 aa).

T2 is modified (N-acetylthreonine). 218-281 (SVLGSHRDRN…SFTPARIKQN (64 aa)) provides a ligand contact to NADP(+).

The protein belongs to the aldo/keto reductase family. As to quaternary structure, monomer.

This chain is Rho crystallin, found in Rana temporaria (European common frog).